Reading from the N-terminus, the 217-residue chain is tRNA (guanine-N(7)-)-methyltransferase (217 aa).

S-adenosyl-L-methionine-binding residues include glutamate 44, aspartate 69, aspartate 96, and aspartate 118. Aspartate 118 is an active-site residue. Lysine 122 is a substrate binding site. The interval 124–129 (RHEKRR) is interaction with RNA. Substrate is bound by residues aspartate 154 and 193–196 (TEYE).

It belongs to the class I-like SAM-binding methyltransferase superfamily. TrmB family.

The catalysed reaction is guanosine(46) in tRNA + S-adenosyl-L-methionine = N(7)-methylguanosine(46) in tRNA + S-adenosyl-L-homocysteine. The protein operates within tRNA modification; N(7)-methylguanine-tRNA biosynthesis. Its function is as follows. Catalyzes the formation of N(7)-methylguanine at position 46 (m7G46) in tRNA. This chain is tRNA (guanine-N(7)-)-methyltransferase, found in Lactococcus lactis subsp. cremoris (strain SK11).